We begin with the raw amino-acid sequence, 647 residues long: Protein cueball (647 aa).

The signal sequence occupies residues 1-22 (MLWCPSVLVPLIAVAACLPVLA). Residues 23–534 (IGTPLEWEFA…CMTPSPWTSN (512 aa)) are Extracellular-facing. N-linked (GlcNAc...) asparagine glycosylation is found at N80 and N106. LDL-receptor class B repeat units lie at residues 119-166 (RNLF…DVCR), 167-211 (RKLY…DQLS), and 212-257 (DRIF…TNDA). N175 is a glycosylation site (N-linked (GlcNAc...) asparagine). An N-linked (GlcNAc...) asparagine glycan is attached at N316. EGF-like domains are found at residues 365–401 (DEKTAQLERDHCLNGGTYIADRVLCICPTGFKGSRCE) and 436–473 (EISKCSGLCLNGGHCKLEDISEKPSCECPHNFAGERCE). 5 disulfides stabilise this stretch: C376–C389, C391–C400, C440–C450, C444–C461, and C463–C472. N-linked (GlcNAc...) asparagine glycosylation occurs at N475. Residues 535–555 (VIIVLVLGIVSCFFLVAVIVH) form a helical membrane-spanning segment. At 556 to 647 (GFRRLYKPKR…LIHNMDDDLY (92 aa)) the chain is on the cytoplasmic side.

Belongs to the cueball family.

Its subcellular location is the cell membrane. In terms of biological role, has a role in spermatogenesis and oogenesis. This Drosophila pseudoobscura pseudoobscura (Fruit fly) protein is Protein cueball.